The sequence spans 485 residues: Protein LAZ1 (485 aa).

Residues 1–19 lie on the Cytoplasmic side of the membrane; sequence MDILKSYHLLAAAYSAPAW. Residues 20-40 traverse the membrane as a helical segment; sequence ASFMAGAFLVLTLSLSLFLVF. Residues 41–53 lie on the Lumenal side of the membrane; the sequence is DHLSTYKNPEEQK. Residues 54-74 form a helical membrane-spanning segment; it reads FLIGVILMVPCYSIESFASLV. The Cytoplasmic portion of the chain corresponds to 75–167; the sequence is KPSISVDCGI…QVVKFGIVQY (93 aa). Residues 168–188 traverse the membrane as a helical segment; it reads MIIKSLTALTALILEAFGVYC. The Lumenal segment spans residues 189–196; sequence EGEFKWGC. Residues 197–217 traverse the membrane as a helical segment; that stretch reads GYPYLAVVLNFSQSWALYCLV. The Cytoplasmic segment spans residues 218 to 241; sequence QFYGATKDELAHIQPLAKFLTFKS. A helical membrane pass occupies residues 242–262; sequence IVFLTWWQGVAIALLSSLGLF. The Lumenal portion of the chain corresponds to 263 to 277; that stretch reads KSSIAQSLQLKTSVQ. The chain crosses the membrane as a helical span at residues 278–298; the sequence is DFIICIEMGIASVVHLYVFPA. At 299-485 the chain is on the cytoplasmic side; the sequence is KPYGLMGDRF…VRGRRWITKD (187 aa). The stretch at 384 to 415 forms a coiled coil; it reads MEKSITKFNEKLHKISQNIKKHDKEKRRVKDD. A disordered region spans residues 400-485; it reads QNIKKHDKEK…VRGRRWITKD (86 aa). Positions 403-416 are enriched in basic and acidic residues; the sequence is KKHDKEKRRVKDDS. A compositionally biased stretch (polar residues) spans 455-469; sequence GYTSAESGGESSSDQ. Residues 476–485 show a composition bias toward basic and acidic residues; sequence VRGRRWITKD.

This sequence belongs to the TMEM184 family.

Its subcellular location is the endomembrane system. It is found in the cell membrane. The protein localises to the cytoplasm. It localises to the cytosol. Required for programmed cell death (PCD) associated with hypersensitive response (HR). Involved both in the induction of EDS1/PAD4 mediated HR and in accelerated cell death in the acd11 mutant. Not required for HR induction elicited through pathways exclusively dependent on CC-NB-LRR resistance proteins. This is Protein LAZ1 from Arabidopsis thaliana (Mouse-ear cress).